Consider the following 130-residue polypeptide: Small ribosomal subunit protein uS11 (130 aa).

The interval 109–130 (EDVTPIPHDGTGRPGGKRGRRV) is disordered.

It belongs to the universal ribosomal protein uS11 family. In terms of assembly, part of the 30S ribosomal subunit.

Its function is as follows. Located on the platform of the 30S subunit. The protein is Small ribosomal subunit protein uS11 of Methanosphaera stadtmanae (strain ATCC 43021 / DSM 3091 / JCM 11832 / MCB-3).